We begin with the raw amino-acid sequence, 226 residues long: Small ribosomal subunit protein uS5 (226 aa).

Residues 1-18 are compositionally biased toward polar residues; it reads MAAPQRSRTTGAPSSGGP. The tract at residues 1 to 45 is disordered; it reads MAAPQRSRTTGAPSSGGPSENERGRGGDRRGGDRRGGDRRGGDDR. A compositionally biased stretch (basic and acidic residues) spans 20-45; it reads ENERGRGGDRRGGDRRGGDRRGGDDR. Residues 48–111 form the S5 DRBM domain; the sequence is FVERVVTINR…EEAKKNFFRV (64 aa).

The protein belongs to the universal ribosomal protein uS5 family. As to quaternary structure, part of the 30S ribosomal subunit. Contacts proteins S4 and S8.

In terms of biological role, with S4 and S12 plays an important role in translational accuracy. Functionally, located at the back of the 30S subunit body where it stabilizes the conformation of the head with respect to the body. This chain is Small ribosomal subunit protein uS5, found in Beutenbergia cavernae (strain ATCC BAA-8 / DSM 12333 / CCUG 43141 / JCM 11478 / NBRC 16432 / NCIMB 13614 / HKI 0122).